We begin with the raw amino-acid sequence, 164 residues long: HTH-type transcriptional regulator IscR (164 aa).

The HTH rrf2-type domain occupies 2 to 131 (RLTSKGRYAV…GSISLEELVK (130 aa)). Residues 28-51 (LADISERQGISLSYLEQLFSRLRK) constitute a DNA-binding region (H-T-H motif). Residues Cys92, Cys98, and Cys104 each contribute to the [2Fe-2S] cluster site. The tract at residues 140-164 (DRQDSDKRRTPNGRPQETINVNLRA) is disordered. The segment covering 152–164 (GRPQETINVNLRA) has biased composition (polar residues).

The cofactor is [2Fe-2S] cluster.

Functionally, regulates the transcription of several operons and genes involved in the biogenesis of Fe-S clusters and Fe-S-containing proteins. This chain is HTH-type transcriptional regulator IscR, found in Xenorhabdus nematophila (strain ATCC 19061 / DSM 3370 / CCUG 14189 / LMG 1036 / NCIMB 9965 / AN6).